Reading from the N-terminus, the 750-residue chain is Elastin (750 aa).

The N-terminal stretch at 1–24 (ARQAAAPLLPGVLLLFSILPASQQ) is a signal peptide. A 4-hydroxyproline mark is found at Pro32, Pro67, Pro102, Pro176, Pro189, Pro192, and Pro211. Residues 83-127 (GAGVGGLGAGLGAFPGAAFPGAASAAALKAAAKAGAGLGGVGGIG) form repeat 1. Residues 83–686 (GAGVGGLGAG…GVGGLGVGGL (604 aa)) are 8 X tandem repeats. A run of 7 repeats spans residues 219 to 262 (VNGL…AGVL), 263 to 318 (PGAG…GVPG), 319 to 393 (VVPG…VPGV), 394 to 482 (PGVP…VPGV), 483 to 554 (GVPG…VGGL), 555 to 619 (VPGV…PGVT), and 620 to 686 (PGVG…VGGL). A 4-hydroxyproline mark is found at Pro276, Pro345, Pro363, Pro368, Pro441, Pro455, and Pro480. 4-hydroxyproline occurs at positions 576, 635, and 720. An intrachain disulfide couples Cys739 to Cys745.

Belongs to the elastin family. As to quaternary structure, the polymeric elastin chains are cross-linked together into an extensible 3D network. In terms of processing, elastin is formed through the cross-linking of its soluble precursor tropoelastin. Cross-linking is initiated through the action of lysyl oxidase on exposed lysines to form allysine. Subsequent spontaneous condensation reactions with other allysine or unmodified lysine residues result in various bi-, tri-, and tetrafunctional cross-links. The most abundant cross-links in mature elastin fibers are lysinonorleucine, allysine aldol, desmosine, and isodesmosine. Hydroxylated on proline residues. Post-translationally, hydroxylation on proline residues within the sequence motif, GXPG, is most likely to be 4-hydroxy as this fits the requirement for 4-hydroxylation in vertebrates.

It is found in the secreted. It localises to the extracellular space. The protein localises to the extracellular matrix. In terms of biological role, major structural protein of tissues such as aorta and nuchal ligament, which must expand rapidly and recover completely. This Gallus gallus (Chicken) protein is Elastin (ELN).